Reading from the N-terminus, the 301-residue chain is Acetyl-coenzyme A carboxylase carboxyl transferase subunit beta (301 aa).

The region spanning 25–294 (LWIKCPETGE…SAANDMNGGA (270 aa)) is the CoA carboxyltransferase N-terminal domain.

It belongs to the AccD/PCCB family. In terms of assembly, acetyl-CoA carboxylase is a heterohexamer composed of biotin carboxyl carrier protein (AccB), biotin carboxylase (AccC) and two subunits each of ACCase subunit alpha (AccA) and ACCase subunit beta (AccD).

The protein resides in the cytoplasm. The enzyme catalyses N(6)-carboxybiotinyl-L-lysyl-[protein] + acetyl-CoA = N(6)-biotinyl-L-lysyl-[protein] + malonyl-CoA. The protein operates within lipid metabolism; malonyl-CoA biosynthesis; malonyl-CoA from acetyl-CoA: step 1/1. In terms of biological role, component of the acetyl coenzyme A carboxylase (ACC) complex. Biotin carboxylase (BC) catalyzes the carboxylation of biotin on its carrier protein (BCCP) and then the CO(2) group is transferred by the transcarboxylase to acetyl-CoA to form malonyl-CoA. The polypeptide is Acetyl-coenzyme A carboxylase carboxyl transferase subunit beta (Rhizobium etli (strain CIAT 652)).